The chain runs to 326 residues: ATP synthase gamma chain (326 aa).

This sequence belongs to the ATPase gamma chain family. In terms of assembly, F-type ATPases have 2 components, CF(1) - the catalytic core - and CF(0) - the membrane proton channel. CF(1) has five subunits: alpha(3), beta(3), gamma(1), delta(1), epsilon(1). CF(0) has three main subunits: a, b and c.

The protein localises to the cell membrane. Functionally, produces ATP from ADP in the presence of a proton gradient across the membrane. The gamma chain is believed to be important in regulating ATPase activity and the flow of protons through the CF(0) complex. This chain is ATP synthase gamma chain, found in Corynebacterium efficiens (strain DSM 44549 / YS-314 / AJ 12310 / JCM 11189 / NBRC 100395).